We begin with the raw amino-acid sequence, 663 residues long: MKLIEDLIEKLNKYSYSYYVLDNPIVADKEYDIMYDELKRLEEETEYINPNSPTQRVGDIILDKFEKTHHKNKLWSLDKAQKKDEVKAFVNKCVKFVEQYNLTHSEKLPSPQFVVTQKLDGLTINCSYNESRLIKSATRGTGEIGEDITEQSKTILNLPNAINYSGEIDVHGEALMTKNALEQYNSNLKVNETPLKNLRNGAAGALRNLNIKETARRKLVAQFYDLSYTDKKLKKYSEILLFLKSQGFNITEYNICNNFDEINQAIDNIGEVRSSLQYDIDGVVIRLNDIETSRLMGYTIKCPKYAIAYKFKAKETTTKLIDVEWNVGRSGRINPTAILEPVELAGVIVKRATLNNMDDIKRKKIKKGARVFLRRSNDVIPEIMGVTEETEGETKEIEAPTICPYCGSEIVKEGVHLFCENTLSCKPQMVKSIVHFASRKAMNIEGFSEKTAEQLFEKLNIKSISDLYRITKEELMSLDKFKDKKASNLINAIEKSKECDLDSFVYSLGIPNVGKKTATDLCKQFKSFENIKKASYFELILVQDIGSIVAKSIVDFFKQEKIEKSLNELFKLGVKPSYEESEVSESVFNDKTVVATGSLQNYSRTEIKEKLESLGAKVAGSVSKKTDYVIAGENAGSKYDKAVALGVKILTEEKFEELIESVK.

Residues Asp28 to Asp32 and Ser76 to Leu77 each bind NAD(+). Catalysis depends on Lys118, which acts as the N6-AMP-lysine intermediate. Positions 139, 173, and 310 each coordinate NAD(+). Residues Cys403, Cys406, Cys419, and Cys425 each contribute to the Zn(2+) site. Positions Val583–Lys663 constitute a BRCT domain.

This sequence belongs to the NAD-dependent DNA ligase family. LigA subfamily. It depends on Mg(2+) as a cofactor. Requires Mn(2+) as cofactor.

It catalyses the reaction NAD(+) + (deoxyribonucleotide)n-3'-hydroxyl + 5'-phospho-(deoxyribonucleotide)m = (deoxyribonucleotide)n+m + AMP + beta-nicotinamide D-nucleotide.. Functionally, DNA ligase that catalyzes the formation of phosphodiester linkages between 5'-phosphoryl and 3'-hydroxyl groups in double-stranded DNA using NAD as a coenzyme and as the energy source for the reaction. It is essential for DNA replication and repair of damaged DNA. This is DNA ligase 1 from Clostridium acetobutylicum (strain ATCC 824 / DSM 792 / JCM 1419 / IAM 19013 / LMG 5710 / NBRC 13948 / NRRL B-527 / VKM B-1787 / 2291 / W).